The chain runs to 271 residues: 3-methyl-2-oxobutanoate hydroxymethyltransferase (271 aa).

Aspartate 53 and aspartate 92 together coordinate Mg(2+). 3-methyl-2-oxobutanoate is bound by residues 53–54, aspartate 92, and lysine 120; that span reads DS. Mg(2+) is bound at residue glutamate 122. Glutamate 189 serves as the catalytic Proton acceptor.

Belongs to the PanB family. In terms of assembly, homodecamer; pentamer of dimers. Mg(2+) is required as a cofactor.

Its subcellular location is the cytoplasm. It catalyses the reaction 3-methyl-2-oxobutanoate + (6R)-5,10-methylene-5,6,7,8-tetrahydrofolate + H2O = 2-dehydropantoate + (6S)-5,6,7,8-tetrahydrofolate. It participates in cofactor biosynthesis; (R)-pantothenate biosynthesis; (R)-pantoate from 3-methyl-2-oxobutanoate: step 1/2. In terms of biological role, catalyzes the reversible reaction in which hydroxymethyl group from 5,10-methylenetetrahydrofolate is transferred onto alpha-ketoisovalerate to form ketopantoate. The chain is 3-methyl-2-oxobutanoate hydroxymethyltransferase from Paraburkholderia xenovorans (strain LB400).